Reading from the N-terminus, the 291-residue chain is Pca regulon regulatory protein (291 aa).

The disordered stretch occupies residues 1–22 (MSDETLVNDPVNPEPARPASAA). The HTH iclR-type domain maps to 45–105 (MTSLARGLAV…SDGRTYSLLP (61 aa)). The segment at residues 67 to 86 (IAQISHRTEIPRAAVRRCLH) is a DNA-binding region (H-T-H motif). The IclR-ED domain maps to 120 to 291 (LAISAQPYLD…SRDLCHQLFG (172 aa)).

Positive regulator of all genes within the pca regulon, pcaBDC, pcaIJ and pcaF. Also required for the chemotactic response to aromatic compounds. The protein is Pca regulon regulatory protein (pcaR) of Pseudomonas putida (Arthrobacter siderocapsulatus).